We begin with the raw amino-acid sequence, 315 residues long: Methionyl-tRNA formyltransferase (315 aa).

113 to 116 (SLLP) serves as a coordination point for (6S)-5,6,7,8-tetrahydrofolate.

Belongs to the Fmt family.

It catalyses the reaction L-methionyl-tRNA(fMet) + (6R)-10-formyltetrahydrofolate = N-formyl-L-methionyl-tRNA(fMet) + (6S)-5,6,7,8-tetrahydrofolate + H(+). Its function is as follows. Attaches a formyl group to the free amino group of methionyl-tRNA(fMet). The formyl group appears to play a dual role in the initiator identity of N-formylmethionyl-tRNA by promoting its recognition by IF2 and preventing the misappropriation of this tRNA by the elongation apparatus. The sequence is that of Methionyl-tRNA formyltransferase from Salmonella gallinarum (strain 287/91 / NCTC 13346).